The chain runs to 116 residues: Ferredoxin-like protein in nif region (116 aa).

In terms of domain architecture, 4Fe-4S ferredoxin-type spans 2–29 (AYTITSQCISCKLCSSVCPTGAIKVAED). Iron-sulfur cluster is bound by residues Cys9, Cys12, Cys15, and Cys19.

This is Ferredoxin-like protein in nif region (fdxN) from Trichormus azollae (Anabaena azollae).